Here is a 44-residue protein sequence, read N- to C-terminus: Somatoliberin (44 aa).

The residue at position 44 (L44) is a Leucine amide.

The protein belongs to the glucagon family.

Its subcellular location is the secreted. In terms of biological role, GRF is released by the hypothalamus and acts on the adenohypophyse to stimulate the secretion of growth hormone. The polypeptide is Somatoliberin (GHRH) (Ovis aries (Sheep)).